Here is a 277-residue protein sequence, read N- to C-terminus: GATA transcription factor 15 (277 aa).

Positions 52 to 94 (AYDDHSTVTTSPSSPSSSSTGSVDCTLSLGTPSSRRAEPVAAA) are disordered. The span at 58 to 74 (TVTTSPSSPSSSSTGSV) shows a compositional bias: low complexity. Residues 154–179 (CANCGTASTPLWRNGPRGPKSLCNAC) form a GATA-type zinc finger.

The protein belongs to the type IV zinc-finger family. Class B subfamily.

Functionally, probable transcription factor that regulates organogenesis during transition from the vegetative to the reproductive phase. Regulates the expression of CYP78A11/PLA1, HD3A and MADS1 during reproductive development in rice. May act upstream of CYP78A11/PLA1 during panicle development. Acts independently of the photoperiodic and gibberellin signaling pathways. This Oryza sativa subsp. indica (Rice) protein is GATA transcription factor 15.